Consider the following 623-residue polypeptide: Putative ABC transporter ATP-binding protein MG014 homolog (623 aa).

The region spanning 16–325 (LILAPLFTFA…YIVLGLILTS (310 aa)) is the ABC transmembrane type-1 domain. The next 6 helical transmembrane spans lie at 27–47 (IIID…VFSI), 86–106 (VILL…CASI), 157–177 (FLRL…FAIA), 180–200 (SDMS…IGIL), 266–286 (NIPF…LLVF), and 307–327 (IFAF…TSLT). The ABC transporter domain maps to 365–611 (LEFKNVAFGL…CDIYVKMKQA (247 aa)). Residue 400 to 407 (GPTGSGKS) participates in ATP binding.

Belongs to the ABC transporter superfamily.

The protein localises to the cell membrane. This Mycoplasma pneumoniae (strain ATCC 29342 / M129 / Subtype 1) (Mycoplasmoides pneumoniae) protein is Putative ABC transporter ATP-binding protein MG014 homolog.